Consider the following 451-residue polypeptide: AAA-ATPase At3g50940 (451 aa).

The signal sequence occupies residues 1-25 (MSSSSESHLATAKTALTAVASVAAA). Residue 254 to 261 (GPPGTGKS) coordinates ATP.

It belongs to the AAA ATPase family. BCS1 subfamily. Mg(2+) serves as cofactor.

The enzyme catalyses ATP + H2O = ADP + phosphate + H(+). In Arabidopsis thaliana (Mouse-ear cress), this protein is AAA-ATPase At3g50940.